Reading from the N-terminus, the 525-residue chain is GMP synthase [glutamine-hydrolyzing] (525 aa).

Positions Arg7–Ser207 constitute a Glutamine amidotransferase type-1 domain. Cys84 acts as the Nucleophile in catalysis. Catalysis depends on residues His181 and Glu183. In terms of domain architecture, GMPS ATP-PPase spans Trp208 to Arg400. ATP is bound at residue Ser235–Leu241.

Homodimer.

The catalysed reaction is XMP + L-glutamine + ATP + H2O = GMP + L-glutamate + AMP + diphosphate + 2 H(+). Its pathway is purine metabolism; GMP biosynthesis; GMP from XMP (L-Gln route): step 1/1. Functionally, catalyzes the synthesis of GMP from XMP. The sequence is that of GMP synthase [glutamine-hydrolyzing] from Blochmanniella pennsylvanica (strain BPEN).